We begin with the raw amino-acid sequence, 146 residues long: TGTPVKILVVRNILLLLFCLVVLLVFAQSSFLPPCEPVNETVAVEKEGCPKCLVFQTTICSGHCLTKEPVYKSPFSTVYQHVCTYRDVRYETVRLPDCPPGVDPHITYPVALSCDCSLCTMDTSDCTIESLQPDFCMSQREDFPVY.

A signal peptide spans 1–28 (TGTPVKILVVRNILLLLFCLVVLLVFAQ). Disulfide bonds link Cys-35–Cys-83, Cys-49–Cys-98, Cys-52–Cys-136, Cys-60–Cys-114, Cys-64–Cys-116, and Cys-119–Cys-126. N-linked (GlcNAc...) asparagine glycosylation is present at Asn-39.

Belongs to the glycoprotein hormones subunit beta family. In terms of assembly, heterodimer of an alpha and a beta chain.

It is found in the secreted. Functionally, involved in gametogenesis and steroidogenesis. This is Gonadotropin subunit beta-2 (cgbb) from Ctenopharyngodon idella (Grass carp).